The following is a 206-amino-acid chain: Large ribosomal subunit protein uL4 (206 aa).

Residues 47 to 94 (NRAQKGRAEVSKSTRKPWRQKGTGRARAGMASSPLWRGGGRVFPNSPE) form a disordered region. Basic residues predominate over residues 59-70 (STRKPWRQKGTG).

Belongs to the universal ribosomal protein uL4 family. As to quaternary structure, part of the 50S ribosomal subunit.

In terms of biological role, one of the primary rRNA binding proteins, this protein initially binds near the 5'-end of the 23S rRNA. It is important during the early stages of 50S assembly. It makes multiple contacts with different domains of the 23S rRNA in the assembled 50S subunit and ribosome. Functionally, forms part of the polypeptide exit tunnel. This Aromatoleum aromaticum (strain DSM 19018 / LMG 30748 / EbN1) (Azoarcus sp. (strain EbN1)) protein is Large ribosomal subunit protein uL4.